Reading from the N-terminus, the 385-residue chain is Putative type I restriction enzyme specificity subunit S.HindORF215P (385 aa).

Belongs to the type-I restriction system S methylase family.

Its function is as follows. A putative specificity subunit for a type I restriction enzyme; the corresponding endonuclease and methylase subunits have multiple frameshifts and are probably not expressed. The sequence is that of Putative type I restriction enzyme specificity subunit S.HindORF215P from Haemophilus influenzae (strain ATCC 51907 / DSM 11121 / KW20 / Rd).